The primary structure comprises 1402 residues: Baculoviral IAP repeat-containing protein 1g (1402 aa).

3 BIR repeats span residues 60-127, 159-227, and 278-345; these read EAKR…CEFL, EEAR…CEFL, and EELR…CVFL. Cys-315, Cys-318, His-335, and Cys-342 together coordinate Zn(2+). An NACHT domain is found at 464 to 759; sequence SVMCVEGEAG…EFLAAVRLTE (296 aa). Residue Lys-476 participates in ATP binding.

Prevents motor-neuron apoptosis induced by a variety of signals. This Mus musculus (Mouse) protein is Baculoviral IAP repeat-containing protein 1g (Naip7).